The sequence spans 316 residues: C1GALT1-specific chaperone 1 (316 aa).

The Cytoplasmic segment spans residues M1–S6. Residues S7–G26 form a helical; Signal-anchor for type II membrane protein membrane-spanning segment. Residues H27–D316 are Lumenal-facing.

The protein belongs to the glycosyltransferase 31 family. Beta3-Gal-T subfamily. Associates with core 1 beta-3-galactosyltransferase (C1GALT1), probably not with the soluble active form.

The protein resides in the membrane. Its function is as follows. Probable chaperone required for the generation of 1 O-glycan Gal-beta1-3GalNAc-alpha1-Ser/Thr (T antigen), which is a precursor for many extended O-glycans in glycoproteins. Probably acts as a specific molecular chaperone assisting the folding/stability of core 1 beta-3-galactosyltransferase (C1GALT1). The chain is C1GALT1-specific chaperone 1 (C1galt1c1) from Rattus norvegicus (Rat).